The sequence spans 69 residues: Protein hunchback (69 aa).

3 consecutive C2H2-type zinc fingers follow at residues 1-11 (KHHLEYHLRNH), 17-39 (FKCEKCSYSCVNKSMLNSHLKSH), and 45-69 (YRCANCTYATKYCHSLKLHLRKYSH).

It belongs to the hunchback C2H2-type zinc-finger protein family.

Its subcellular location is the nucleus. Functionally, gap class segmentation protein that controls development of head structures. The polypeptide is Protein hunchback (hb) (Apis mellifera (Honeybee)).